Here is a 181-residue protein sequence, read N- to C-terminus: CASP-like protein 5A1 (181 aa).

Residues 1-38 are Cytoplasmic-facing; the sequence is MFASRPVVHPLEVAAPAHPVQQPAPGVLMKDLPGMPGT. Residues 39–59 traverse the membrane as a helical segment; it reads PGGLGLRVLQLLFAAISLAVM. Residues 60 to 77 lie on the Extracellular side of the membrane; it reads SSTADFASVSAFCYLITT. A helical transmembrane segment spans residues 78-98; that stretch reads TVLQCVWSLTVAIVDIYALLV. Residues 99–115 lie on the Cytoplasmic side of the membrane; sequence KRCLQNRRAVTLFSIGD. Residues 116-136 form a helical membrane-spanning segment; the sequence is GITWLVSFSGACAAAGIPVLI. Residues 137–153 are Extracellular-facing; that stretch reads DADLIMCSENPCASFQT. Residues 154 to 174 form a helical membrane-spanning segment; it reads AVAMGFMCCFSLLPSFLLNFY. The Cytoplasmic segment spans residues 175–181; that stretch reads SIASSHG.

This sequence belongs to the Casparian strip membrane proteins (CASP) family. As to quaternary structure, homodimer and heterodimers.

It localises to the cell membrane. The sequence is that of CASP-like protein 5A1 from Zea mays (Maize).